The chain runs to 378 residues: Secreted LysM effector ldpA (378 aa).

A signal peptide spans 1–19; the sequence is MMKSIRFLASALALCLVDA. Residues 118–131 show a composition bias toward low complexity; the sequence is WTPPTTTTRSTSSS. The disordered stretch occupies residues 118 to 139; sequence WTPPTTTTRSTSSSAGNGVTTP. Residues 152-198 form the LysM 1 domain; sequence RFYLVVSGDSCYDIAAAQGISLDNFYTWNPAVGSSCGGLWPDYYVCV. The segment at 208–230 is disordered; that stretch reads TTTTTTTPTTTSTTTTTAGNGVT. LysM domains lie at 245–291 and 330–376; these read KFYQ…YVCV and KFYL…YVCV.

Belongs to the secreted LysM effector family.

It is found in the secreted. It localises to the cell wall. The protein localises to the extracellular space. Its subcellular location is the extracellular matrix. Its function is as follows. Cell wall chitin of A.fumigatus recruits lung eosinophils during infection and ldpA might have a role in sequestration of chitin and act as triggers of host immunity to dampen host defense. The protein is Secreted LysM effector ldpA of Aspergillus fumigatus (strain ATCC MYA-4609 / CBS 101355 / FGSC A1100 / Af293) (Neosartorya fumigata).